The sequence spans 125 residues: Small ribosomal subunit protein eS8 (125 aa).

The segment at 1–34 is disordered; that stretch reads MQWQGRSVRKSTGGRYSPSRGKRRREIGSAPAET.

The protein belongs to the eukaryotic ribosomal protein eS8 family. As to quaternary structure, part of the 30S ribosomal subunit.

This is Small ribosomal subunit protein eS8 from Methanospirillum hungatei JF-1 (strain ATCC 27890 / DSM 864 / NBRC 100397 / JF-1).